The sequence spans 156 residues: Large ribosomal subunit protein uL22 (156 aa).

The protein belongs to the universal ribosomal protein uL22 family. As to quaternary structure, part of the 50S ribosomal subunit.

Its function is as follows. This protein binds specifically to 23S rRNA. It makes multiple contacts with different domains of the 23S rRNA in the assembled 50S subunit and ribosome. In terms of biological role, the globular domain of the protein is located near the polypeptide exit tunnel on the outside of the subunit, while an extended beta-hairpin is found that lines the wall of the exit tunnel in the center of the 70S ribosome. The sequence is that of Large ribosomal subunit protein uL22 from Hyperthermus butylicus (strain DSM 5456 / JCM 9403 / PLM1-5).